We begin with the raw amino-acid sequence, 1023 residues long: Lon protease homolog (1023 aa).

515–522 (GPPGVGKT) is an ATP binding site. The region spanning 810 to 1003 (TNMIGVINGL…IEIITDPNVI (194 aa)) is the Lon proteolytic domain. The active site involves Ser906.

Belongs to the peptidase S16 family.

The sequence is that of Lon protease homolog from Acanthamoeba polyphaga (Amoeba).